Reading from the N-terminus, the 556-residue chain is Arginine--tRNA ligase (556 aa).

Residues 129–139 (ANPTGPLHVGH) carry the 'HIGH' region motif.

The protein belongs to the class-I aminoacyl-tRNA synthetase family. Monomer.

It localises to the cytoplasm. The enzyme catalyses tRNA(Arg) + L-arginine + ATP = L-arginyl-tRNA(Arg) + AMP + diphosphate. The sequence is that of Arginine--tRNA ligase from Desulfosudis oleivorans (strain DSM 6200 / JCM 39069 / Hxd3) (Desulfococcus oleovorans).